The chain runs to 436 residues: Nicotinate phosphoribosyltransferase (436 aa).

The residue at position 231 (H231) is a Phosphohistidine; by autocatalysis.

Belongs to the NAPRTase family. In terms of processing, transiently phosphorylated on a His residue during the reaction cycle. Phosphorylation strongly increases the affinity for substrates and increases the rate of nicotinate D-ribonucleotide production. Dephosphorylation regenerates the low-affinity form of the enzyme, leading to product release.

The catalysed reaction is nicotinate + 5-phospho-alpha-D-ribose 1-diphosphate + ATP + H2O = nicotinate beta-D-ribonucleotide + ADP + phosphate + diphosphate. It participates in cofactor biosynthesis; NAD(+) biosynthesis; nicotinate D-ribonucleotide from nicotinate: step 1/1. Functionally, catalyzes the synthesis of beta-nicotinate D-ribonucleotide from nicotinate and 5-phospho-D-ribose 1-phosphate at the expense of ATP. The chain is Nicotinate phosphoribosyltransferase from Vibrio campbellii (strain ATCC BAA-1116).